The following is a 310-amino-acid chain: Vomeronasal type-1 receptor 93 (310 aa).

At 1-20 (MNKDNTLHVDTIMKITMFSE) the chain is on the extracellular side. The helical transmembrane segment at 21–41 (VSVGILANSILFFAHLCMLLG) threads the bilayer. Topologically, residues 42–59 (ENKPKPIHLYIASLSLTQ) are cytoplasmic. The helical transmembrane segment at 60 to 80 (LMLLITMGLIAADMFISQGIW) threads the bilayer. Residues 81–93 (DSTSCQSLIYLHR) lie on the Extracellular side of the membrane. A disulfide bond links C85 and C172. Residues 94 to 114 (LSRGFTLSAACLLNVFWMITL) form a helical membrane-spanning segment. Residues 115 to 134 (SSKKSRLTKFKHNSPHHISG) lie on the Cytoplasmic side of the membrane. Residues 135–155 (AFLLLCVLYMCFSSHLILSII) form a helical membrane-spanning segment. Residues 156–193 (ATPNLTSDNFMYVTKSCSFLPMCYSRTSMFSTTIAVRE) lie on the Extracellular side of the membrane. An N-linked (GlcNAc...) asparagine glycan is attached at N159. A helical membrane pass occupies residues 194-214 (AFFIGLMALSSGYLVAFLWRH). Residues 215 to 238 (RKQAQHLHSTGLSSKASPEQRATE) are Cytoplasmic-facing. A helical membrane pass occupies residues 239–259 (TILLLMSFFVVLYILENVVFY). Over 260–269 (SRMKFKDGST) the chain is Extracellular. Residues 270–290 (FYCVQIIVSHSYATVSSFVFI) form a helical membrane-spanning segment. Over 291 to 310 (FTEKRMTKILRSVCTRIINI) the chain is Cytoplasmic.

This sequence belongs to the G-protein coupled receptor 1 family. In terms of tissue distribution, expressed in 1-4% of neurons of the vomeronasal organ. Only one pheromone receptor gene may be expressed in a particular neuron. Not expressed in the main olfactory epithelium.

The protein localises to the cell membrane. Its function is as follows. Putative pheromone receptor implicated in the regulation of social as well as reproductive behavior. The sequence is that of Vomeronasal type-1 receptor 93 (Vom1r93) from Rattus norvegicus (Rat).